Consider the following 420-residue polypeptide: L-rhamnose isomerase (420 aa).

3 residues coordinate Mn(2+): His-262, Asp-294, and Asp-296.

The protein belongs to the rhamnose isomerase family. Homotetramer. It depends on Mn(2+) as a cofactor.

Its subcellular location is the cytoplasm. The enzyme catalyses L-rhamnopyranose = L-rhamnulose. It participates in carbohydrate degradation; L-rhamnose degradation; glycerone phosphate from L-rhamnose: step 1/3. Functionally, catalyzes the interconversion of L-rhamnose and L-rhamnulose. The polypeptide is L-rhamnose isomerase (Pectobacterium atrosepticum (strain SCRI 1043 / ATCC BAA-672) (Erwinia carotovora subsp. atroseptica)).